A 147-amino-acid polypeptide reads, in one-letter code: MVHLTGDEKAAVTALWGKVNVEDVGGEALGRLLVVYPWTQRFFESFGDLSTPDAVMNNPKVKAHGKKVLGAFSDGLAHLDNLKGTFAQLSELHCDKLHVDPENFRLLGNVLVCVLAHHFGKEFTPQVQAAYQKVVAGVANALAHKYH.

Val2 is subject to N-acetylvaline. In terms of domain architecture, Globin spans 3 to 147; that stretch reads HLTGDEKAAV…VANALAHKYH (145 aa). Thr13 is modified (phosphothreonine). Ser45 carries the phosphoserine modification. Position 60 is an N6-acetyllysine (Lys60). A heme b-binding site is contributed by His64. An N6-acetyllysine modification is found at Lys83. His93 provides a ligand contact to heme b. Cys94 carries the post-translational modification S-nitrosocysteine. Lys145 is subject to N6-acetyllysine.

This sequence belongs to the globin family. In terms of assembly, heterotetramer of two alpha chains and two beta chains. In terms of tissue distribution, red blood cells.

Its function is as follows. Involved in oxygen transport from the lung to the various peripheral tissues. The polypeptide is Hemoglobin subunit beta (HBB) (Saimiri sciureus (Common squirrel monkey)).